Here is a 295-residue protein sequence, read N- to C-terminus: ATP synthase gamma chain (295 aa).

Belongs to the ATPase gamma chain family. In terms of assembly, F-type ATPases have 2 components, CF(1) - the catalytic core - and CF(0) - the membrane proton channel. CF(1) has five subunits: alpha(3), beta(3), gamma(1), delta(1), epsilon(1). CF(0) has three main subunits: a, b and c.

The protein localises to the cell inner membrane. Produces ATP from ADP in the presence of a proton gradient across the membrane. The gamma chain is believed to be important in regulating ATPase activity and the flow of protons through the CF(0) complex. This chain is ATP synthase gamma chain, found in Cytophaga hutchinsonii (strain ATCC 33406 / DSM 1761 / CIP 103989 / NBRC 15051 / NCIMB 9469 / D465).